The primary structure comprises 181 residues: Swi1-interacting protein swi3 (181 aa).

The tract at residues 1-47 (MSTAASDSGVEKLVEENKREEVKKNEEEKEFDLGLEENPDSVKKPRK) is disordered. Basic and acidic residues predominate over residues 9 to 27 (GVEKLVEENKREEVKKNEE). The segment covering 28–39 (EKEFDLGLEENP) has biased composition (acidic residues).

This sequence belongs to the CSM3 family. As to quaternary structure, fork protection complex (FPC) consisting of swi1 and swi3 interacts with mat1 cis-acting sequences and mat1-proximal polar-terminator of replication (RTS1).

Its subcellular location is the nucleus. In terms of biological role, forms a fork protection complex (FPC) with swi1. FPC coordinates leading and lagging strand synthesis and moves with the replication fork. It is required for programmed fork-pausing which is necessary for mating-type switching. FPC stabilizes replication forks in a configuration that is recognized by replication checkpoint sensors. It is involved in termination at the mat1-proximal polar-terminator of replication (RTS1) and also required for activation of the Rad53-like checkpoint kinase cds1. The protein is Swi1-interacting protein swi3 (swi3) of Schizosaccharomyces pombe (strain 972 / ATCC 24843) (Fission yeast).